Reading from the N-terminus, the 437-residue chain is Gamma-glutamyl phosphate reductase (437 aa).

It belongs to the gamma-glutamyl phosphate reductase family.

It localises to the cytoplasm. It catalyses the reaction L-glutamate 5-semialdehyde + phosphate + NADP(+) = L-glutamyl 5-phosphate + NADPH + H(+). The protein operates within amino-acid biosynthesis; L-proline biosynthesis; L-glutamate 5-semialdehyde from L-glutamate: step 2/2. Its function is as follows. Catalyzes the NADPH-dependent reduction of L-glutamate 5-phosphate into L-glutamate 5-semialdehyde and phosphate. The product spontaneously undergoes cyclization to form 1-pyrroline-5-carboxylate. The sequence is that of Gamma-glutamyl phosphate reductase from Synechococcus sp. (strain CC9902).